A 134-amino-acid polypeptide reads, in one-letter code: Putative cytochrome c oxidase subunit 6b-like (134 aa).

A disordered region spans residues 1–61 (MSSAQMDPHD…DSGRETDAAV (61 aa)). Basic and acidic residues-rich tracts occupy residues 7 to 19 (DPHDKMRSRDISK) and 44 to 61 (ATFRAKRGDSGRETDAAV). The CHCH domain occupies 71–114 (TRHCFNRFMQYHKCIEKNGRDANDCNNLRDYVRSICPEELVSKI). Positions 74–84 (CFNRFMQYHKC) match the Cx9C motif motif. 2 cysteine pairs are disulfide-bonded: C74–C106 and C84–C95. A Cx10C motif motif is present at residues 95–106 (CNNLRDYVRSIC).

The protein belongs to the cytochrome c oxidase subunit 6B (TC 3.D.4.8) family.

Its subcellular location is the mitochondrion. Its function is as follows. This protein is one of the nuclear-coded polypeptide chains of cytochrome c oxidase, the terminal oxidase in mitochondrial electron transport. This protein may be one of the heme-binding subunits of the oxidase. The sequence is that of Putative cytochrome c oxidase subunit 6b-like from Arabidopsis thaliana (Mouse-ear cress).